A 591-amino-acid polypeptide reads, in one-letter code: Frizzled-9 (591 aa).

The first 22 residues, 1–22 (MAVAPLRGALLLWQLLAAGGAA), serve as a signal peptide directing secretion. Residues 23 to 229 (LEIGRFDPER…EVFWSRRDKD (207 aa)) lie on the Extracellular side of the membrane. The region spanning 34-155 (RGAAPCQAVE…NDPHALCMEA (122 aa)) is the FZ domain. Cystine bridges form between Cys-39/Cys-100, Cys-47/Cys-93, Cys-84/Cys-122, Cys-111/Cys-152, and Cys-115/Cys-139. Asn-53 is a glycosylation site (N-linked (GlcNAc...) asparagine). Residues 58–172 (PNLLGHTSQG…PAEPHKGLGM (115 aa)) are required for Wnt-activated receptor activity. N-linked (GlcNAc...) asparagine glycosylation is present at Asn-158. The chain crosses the membrane as a helical span at residues 230 to 250 (FALVWMAVWSALCFFSTAFTV). The Cytoplasmic portion of the chain corresponds to 251–266 (LTFLLEPHRFQYPERP). A helical membrane pass occupies residues 267-287 (IIFLSMCYNVYSLAFLIRAVA). The Extracellular portion of the chain corresponds to 288 to 315 (GAQSVACDQEAGALYVIQEGLENTGCTL). Residues 316–336 (VFLLLYYFGMASSLWWVVLTL) form a helical membrane-spanning segment. Residues 337–355 (TWFLAAGKKWGHEAIEAHG) are Cytoplasmic-facing. A helical transmembrane segment spans residues 356–376 (SYFHMAAWGLPALKTIVILTL). The Extracellular segment spans residues 377–400 (RKVAGDELTGLCYVASTDAAALTG). Residues 401-421 (FVLVPLSGYLVLGSSFLLTGF) traverse the membrane as a helical segment. Residues 422–447 (VALFHIRKIMKTGGTNTEKLEKLMVK) lie on the Cytoplasmic side of the membrane. The helical transmembrane segment at 448–468 (IGVFSILYTVPATCVIVCYVY) threads the bilayer. Residues 469-508 (ERLNMDFWRLRATEQPCAAAAGPGGRRDCSLPGGSVPTVA) are Extracellular-facing. The chain crosses the membrane as a helical span at residues 509–529 (VFMLKIFMSLVVGITSGVWVW). The Cytoplasmic portion of the chain corresponds to 530–591 (SSKTFQTWQS…DPSLENPTHL (62 aa)). The Lys-Thr-X-X-X-Trp motif, mediates interaction with the PDZ domain of Dvl family members motif lies at 532–537 (KTFQTW). The required for CTNNB1 accumulation and TCF transcription factor activity stretch occupies residues 554 to 591 (ACRAPGSYGRGTHCHYKAPTVVLHMTKTDPSLENPTHL).

Belongs to the G-protein coupled receptor Fz/Smo family. In terms of processing, ubiquitinated by ZNRF3, leading to its degradation by the proteasome. As to expression, expressed predominantly in adult and fetal brain, testis, eye, skeletal muscle and kidney. Moderately expressed in pancreas, thyroid, adrenal cortex, small intestine and stomach. Detected in fetal liver and kidney. Expressed in neural progenitor cells.

It is found in the cell membrane. Receptor for WNT2 that is coupled to the beta-catenin canonical signaling pathway, which leads to the activation of disheveled proteins, inhibition of GSK-3 kinase, nuclear accumulation of beta-catenin and activation of Wnt target genes. Plays a role in neuromuscular junction (NMJ) assembly by negatively regulating the clustering of acetylcholine receptors (AChR) through the beta-catenin canonical signaling pathway. May play a role in neural progenitor cells (NPCs) viability through the beta-catenin canonical signaling pathway by negatively regulating cell cycle arrest leading to inhibition of neuron apoptotic process. During hippocampal development, regulates neuroblast proliferation and apoptotic cell death. Controls bone formation through non canonical Wnt signaling mediated via ISG15. Positively regulates bone regeneration through non canonical Wnt signaling. The sequence is that of Frizzled-9 (FZD9) from Homo sapiens (Human).